A 201-amino-acid chain; its full sequence is Protein LIGHT-DEPENDENT SHORT HYPOCOTYLS 2 (201 aa).

Over residues 1-14 the composition is skewed to polar residues; it reads MDLISQNHNNRNPN. Disordered stretches follow at residues 1–37 and 151–201; these read MDLI…YENQ and SRGV…GATQ. A compositionally biased stretch (low complexity) spans 15 to 32; that stretch reads TSLSTQTPSSFSSPPSSS. The ALOG domain occupies 33-160; that stretch reads RYENQKRRDW…SRGVSYEKKR (128 aa). The short motif at 158–162 is the Nuclear localization signal element; it reads KKRKR.

This sequence belongs to the plant homeotic and developmental regulators ALOG protein family.

It localises to the nucleus. Its function is as follows. Probable transcription regulator that acts as a developmental regulator by promoting cell growth in response to light. This chain is Protein LIGHT-DEPENDENT SHORT HYPOCOTYLS 2 (LSH2), found in Arabidopsis thaliana (Mouse-ear cress).